Reading from the N-terminus, the 1038-residue chain is GTPase-activating Rap/Ran-GAP domain-like protein 3 (1038 aa).

Lysine 6 and serine 68 each carry phosphoserine. Residues leucine 214–leucine 430 form the Rap-GAP domain. Residues serine 449 and serine 455 each carry the phosphoserine modification. Positions proline 512–tyrosine 824 constitute a CNH domain. Disordered stretches follow at residues glutamate 833–serine 863 and leucine 937–lysine 1038. Threonine 851 carries the phosphothreonine modification. Positions serine 1019–alanine 1028 are enriched in polar residues.

This sequence belongs to the GARNL3 family.

The polypeptide is GTPase-activating Rap/Ran-GAP domain-like protein 3 (Garnl3) (Mus musculus (Mouse)).